Reading from the N-terminus, the 267-residue chain is Phosphate import ATP-binding protein PstB 2 (267 aa).

One can recognise an ABC transporter domain in the interval 21-262 (LATKDLHVYY…AQCQSTNDYV (242 aa)). 53–60 (GPSGCGKS) is a binding site for ATP.

The protein belongs to the ABC transporter superfamily. Phosphate importer (TC 3.A.1.7) family. The complex is composed of two ATP-binding proteins (PstB), two transmembrane proteins (PstC and PstA) and a solute-binding protein (PstS).

It localises to the cell membrane. The enzyme catalyses phosphate(out) + ATP + H2O = ADP + 2 phosphate(in) + H(+). Functionally, part of the ABC transporter complex PstSACB involved in phosphate import. Responsible for energy coupling to the transport system. This chain is Phosphate import ATP-binding protein PstB 2, found in Streptococcus pyogenes serotype M18 (strain MGAS8232).